The chain runs to 230 residues: Orotidine 5'-phosphate decarboxylase (230 aa).

Substrate contacts are provided by residues aspartate 10, lysine 32, 59–68 (DLKLHDIPNT), threonine 118, arginine 179, glutamine 188, glycine 208, and arginine 209. Residue lysine 61 is the Proton donor of the active site.

The protein belongs to the OMP decarboxylase family. Type 1 subfamily. As to quaternary structure, homodimer.

The catalysed reaction is orotidine 5'-phosphate + H(+) = UMP + CO2. The protein operates within pyrimidine metabolism; UMP biosynthesis via de novo pathway; UMP from orotate: step 2/2. In terms of biological role, catalyzes the decarboxylation of orotidine 5'-monophosphate (OMP) to uridine 5'-monophosphate (UMP). This Opitutus terrae (strain DSM 11246 / JCM 15787 / PB90-1) protein is Orotidine 5'-phosphate decarboxylase.